We begin with the raw amino-acid sequence, 340 residues long: MAESYKQSGVDIHAGYEAVERMKKHVNKTMRKEVLGGLGSFGAAFDLSQLNMKAPVLVSGTDGVGTKLRLAIDSDRHDTIGIDAVAMCVNDILTTGAMPLYFLDYLALNKVDPVIVEQIVKGVADGCAESECALIGGETAEMGDMYHTGDYDIAGFAVGAVEKDAYITGERIAEGDVILGLASSGIHSNGYSLVRKIIKDNNLDLDAEFDNGKTLLDVVLEPTRLYVKSAKAILDAADVHGMCHVTGGGFIENVPRVFVTDGLYPEIDVTNIPRQKIFDLLQEKGSIDKMEMYNIFNMGIGFIFIVPREAVEKVRSAVNEEVFEIGRVVRGDKAIDIKGV.

Belongs to the AIR synthase family.

The protein resides in the cytoplasm. The enzyme catalyses 2-formamido-N(1)-(5-O-phospho-beta-D-ribosyl)acetamidine + ATP = 5-amino-1-(5-phospho-beta-D-ribosyl)imidazole + ADP + phosphate + H(+). It participates in purine metabolism; IMP biosynthesis via de novo pathway; 5-amino-1-(5-phospho-D-ribosyl)imidazole from N(2)-formyl-N(1)-(5-phospho-D-ribosyl)glycinamide: step 2/2. The chain is Phosphoribosylformylglycinamidine cyclo-ligase from Macrococcus caseolyticus (strain JCSC5402) (Macrococcoides caseolyticum).